A 123-amino-acid polypeptide reads, in one-letter code: Large ribosomal subunit protein bL12 (123 aa).

This sequence belongs to the bacterial ribosomal protein bL12 family. In terms of assembly, homodimer. Part of the ribosomal stalk of the 50S ribosomal subunit. Forms a multimeric L10(L12)X complex, where L10 forms an elongated spine to which 2 to 4 L12 dimers bind in a sequential fashion. Binds GTP-bound translation factors.

Its function is as follows. Forms part of the ribosomal stalk which helps the ribosome interact with GTP-bound translation factors. Is thus essential for accurate translation. This chain is Large ribosomal subunit protein bL12, found in Shewanella sp. (strain ANA-3).